A 793-amino-acid chain; its full sequence is Peroxidase-like protein (793 aa).

The signal sequence occupies residues 1–20; it reads MNLFICHVFLLLLHGYLIIC.

It belongs to the peroxidase family. As to expression, prismatic layer of shell (at protein level). Expressed primarily in the mantle with highest level in the mantle edge and lower level in the mantle pallium.

It localises to the secreted. This chain is Peroxidase-like protein, found in Margaritifera margaritifera (Freshwater pearl mussel).